The sequence spans 430 residues: Adenylosuccinate synthetase (430 aa).

Residues 12–18 and 40–42 each bind GTP; these read GDEGKGK and GHT. Asp13 serves as the catalytic Proton acceptor. Residues Asp13 and Gly40 each coordinate Mg(2+). Residues 13–16, 38–41, Thr129, Arg143, Gln224, Thr239, and Arg303 contribute to the IMP site; these read DEGK and NAGH. The active-site Proton donor is the His41. Position 299–305 (299–305) interacts with substrate; that stretch reads TVSNRER. GTP-binding positions include Arg305, 331 to 333, and 413 to 415; these read KLD and STG.

Belongs to the adenylosuccinate synthetase family. As to quaternary structure, homodimer. Requires Mg(2+) as cofactor.

Its subcellular location is the cytoplasm. It carries out the reaction IMP + L-aspartate + GTP = N(6)-(1,2-dicarboxyethyl)-AMP + GDP + phosphate + 2 H(+). The protein operates within purine metabolism; AMP biosynthesis via de novo pathway; AMP from IMP: step 1/2. Its function is as follows. Plays an important role in the de novo pathway of purine nucleotide biosynthesis. Catalyzes the first committed step in the biosynthesis of AMP from IMP. The sequence is that of Adenylosuccinate synthetase from Ehrlichia ruminantium (strain Gardel).